A 283-amino-acid polypeptide reads, in one-letter code: SNF1-related protein kinase regulatory subunit beta-1 (283 aa).

The segment covering 1–10 has biased composition (basic and acidic residues); sequence MGNANGKDED. Positions 1–63 are disordered; the sequence is MGNANGKDED…PARSPSPFLF (63 aa). Gly2 is lipidated: N-myristoyl glycine. The span at 43 to 60 shows a compositional bias: low complexity; the sequence is SDSMSSSPPGSPARSPSP. A kinase-interacting sequence (KIS) region spans residues 101–178; it reads PTIITWNQGG…VGNVCNILDV (78 aa). The tract at residues 215 to 283 is association with SNF1 complex (ASC); that stretch reads EPLAVPPQLH…TVVLYKPLTR (69 aa).

This sequence belongs to the 5'-AMP-activated protein kinase beta subunit family. As to quaternary structure, subunit of a probable heterotrimeric complex consisting of an alpha catalytic (KIN10 or KIN11) subunit, and a beta (KINB) and a gamma (KING or SNF4) non-catalytic regulatory subunits. Interacts with SNF4 and CBL1. Interacts with FLZ1, FLZ2, FLZ8, FLZ9, FLZ10, FLZ12, FLZ13, FLZ14 and FLZ15. In terms of processing, sumoylated by SIZ1. As to expression, expressed in vegetative organs and, to lower extent, in reproductive organs.

Its subcellular location is the cell membrane. Regulatory subunit of the probable trimeric SNF1-related protein kinase (SnRK) complex, which may play a role in a signal transduction cascade regulating gene expression and carbohydrate metabolism in higher plants. The SnRK complex may also be involved in the regulation of fatty acid synthesis by phosphorylation of acetyl-CoA carboxylase and in assimilation of nitrogen by phosphorylating nitrate reductase. The protein is SNF1-related protein kinase regulatory subunit beta-1 (KINB1) of Arabidopsis thaliana (Mouse-ear cress).